The following is a 266-amino-acid chain: MRIALKIAYDGTKFYGFQRQPDLRTVEGELIKVLKKLGIIEDVKEANFKGASRTDRGVSALGNVIAFNTAKPELAEARILNHHLRDIWILGKAEVPEDFHPRFWAKNKIYRYYLFDEGIDVIKLKACAEAFLGRHDFSNFARLEEFRKPVREINRIDVFSRGRIIVVEIEGKSFLWEMTRRIITALKLCGLGVLSIGDVELMLKEKVDKKLPPAPPENLVLWEVGYEGIKFEVDAYAIEKVKREFLERFRKYLTKSAILEDWLISL.

Catalysis depends on D55, which acts as the Nucleophile. Residue Y110 participates in substrate binding.

Belongs to the tRNA pseudouridine synthase TruA family.

It carries out the reaction uridine(38/39/40) in tRNA = pseudouridine(38/39/40) in tRNA. Its function is as follows. Formation of pseudouridine at positions 38, 39 and 40 in the anticodon stem and loop of transfer RNAs. The protein is tRNA pseudouridine synthase A of Thermococcus sibiricus (strain DSM 12597 / MM 739).